The primary structure comprises 116 residues: Non-specific lipid-transfer protein 8 (116 aa).

An N-terminal signal peptide occupies residues 1–24; sequence MNVLKCLAIISVLGIFFIPRYSES. Disulfide bonds link cysteine 28/cysteine 76, cysteine 38/cysteine 53, cysteine 54/cysteine 98, and cysteine 74/cysteine 112.

Belongs to the plant LTP family.

Its function is as follows. Plant non-specific lipid-transfer proteins transfer phospholipids as well as galactolipids across membranes. May play a role in wax or cutin deposition in the cell walls of expanding epidermal cells and certain secretory tissues. This is Non-specific lipid-transfer protein 8 (LTP8) from Arabidopsis thaliana (Mouse-ear cress).